Consider the following 337-residue polypeptide: Probable RuBisCO transcriptional regulator (337 aa).

In terms of domain architecture, HTH lysR-type spans 6-63; it reads FTLDQLRILKAIAVEGSFKRAADSLYVSQPAVSLQVQNLERQLDVPLFDRGGRRAQLT. Positions 23 to 42 form a DNA-binding region, H-T-H motif; sequence FKRAADSLYVSQPAVSLQVQ.

It belongs to the LysR transcriptional regulatory family.

In terms of biological role, trans-acting transcriptional regulator of RuBisCO genes (rbcL and rbcS) expression. The protein is Probable RuBisCO transcriptional regulator (rbcR) of Nostoc sp. (strain PCC 7120 / SAG 25.82 / UTEX 2576).